The primary structure comprises 943 residues: Isoleucine--tRNA ligase (943 aa).

Positions P58–H68 match the 'HIGH' region motif. E567 is an L-isoleucyl-5'-AMP binding site. Positions K608 to S612 match the 'KMSKS' region motif. K611 serves as a coordination point for ATP. Zn(2+) contacts are provided by C906, C909, C926, and C929.

Belongs to the class-I aminoacyl-tRNA synthetase family. IleS type 1 subfamily. Monomer. Zn(2+) is required as a cofactor.

It is found in the cytoplasm. It carries out the reaction tRNA(Ile) + L-isoleucine + ATP = L-isoleucyl-tRNA(Ile) + AMP + diphosphate. Functionally, catalyzes the attachment of isoleucine to tRNA(Ile). As IleRS can inadvertently accommodate and process structurally similar amino acids such as valine, to avoid such errors it has two additional distinct tRNA(Ile)-dependent editing activities. One activity is designated as 'pretransfer' editing and involves the hydrolysis of activated Val-AMP. The other activity is designated 'posttransfer' editing and involves deacylation of mischarged Val-tRNA(Ile). This is Isoleucine--tRNA ligase from Pseudomonas paraeruginosa (strain DSM 24068 / PA7) (Pseudomonas aeruginosa (strain PA7)).